The sequence spans 127 residues: PanD regulatory factor (127 aa).

An N-acetyltransferase domain is found at 1–127 (MKLTILRLEH…TAQHDGWEKR (127 aa)). Residues 66-68 (LRV) and 72-79 (TRRRGVGQ) each bind CoA.

Belongs to the PanZ/PanM family. As to quaternary structure, interacts with PanD in the presence of CoA. Monomer.

Its function is as follows. Controls both the activation and catalytic activity of PanD in a coenzyme A (CoA)-dependent fashion. Binding of CoA or a derivative to PanM leads to interaction with PanD, which promotes the processing and activation of pro-PanD, and subsequent substrate-mediated inhibition of the active form of PanD. Lacks acetyltransferase activity. The protein is PanD regulatory factor of Salmonella typhimurium (strain LT2 / SGSC1412 / ATCC 700720).